We begin with the raw amino-acid sequence, 171 residues long: 3-hydroxydecanoyl-[acyl-carrier-protein] dehydratase (171 aa).

H70 is a catalytic residue.

The protein belongs to the thioester dehydratase family. FabA subfamily. Homodimer.

It is found in the cytoplasm. It carries out the reaction a (3R)-hydroxyacyl-[ACP] = a (2E)-enoyl-[ACP] + H2O. The catalysed reaction is (3R)-hydroxydecanoyl-[ACP] = (2E)-decenoyl-[ACP] + H2O. The enzyme catalyses (2E)-decenoyl-[ACP] = (3Z)-decenoyl-[ACP]. It functions in the pathway lipid metabolism; fatty acid biosynthesis. Necessary for the introduction of cis unsaturation into fatty acids. Catalyzes the dehydration of (3R)-3-hydroxydecanoyl-ACP to E-(2)-decenoyl-ACP and then its isomerization to Z-(3)-decenoyl-ACP. Can catalyze the dehydratase reaction for beta-hydroxyacyl-ACPs with saturated chain lengths up to 16:0, being most active on intermediate chain length. In Photobacterium profundum (strain SS9), this protein is 3-hydroxydecanoyl-[acyl-carrier-protein] dehydratase.